The primary structure comprises 335 residues: Probable G-protein coupled receptor 174 (335 aa).

Over Met1–Thr27 the chain is Extracellular. N-linked (GlcNAc...) asparagine glycosylation is found at Asn4 and Asn8. A helical transmembrane segment spans residues Val28–Met48. Over Lys49–Arg53 the chain is Cytoplasmic. The helical transmembrane segment at Ala54–Leu74 threads the bilayer. Over Arg75 to Cys91 the chain is Extracellular. The cysteines at positions 91 and 168 are disulfide-linked. The chain crosses the membrane as a helical span at residues Met92–Ile112. Residues Ser113–Asp134 lie on the Cytoplasmic side of the membrane. A helical membrane pass occupies residues Leu135 to Leu155. The Extracellular segment spans residues Arg156 to Ser182. Residue Asn164 is glycosylated (N-linked (GlcNAc...) asparagine). The chain crosses the membrane as a helical span at residues Val183–Tyr203. Over Cys204–Met231 the chain is Cytoplasmic. A helical transmembrane segment spans residues Ile232 to Leu252. Over Asp253–Arg268 the chain is Extracellular. Residues Val269–Pro289 traverse the membrane as a helical segment. Residues Val290–Cys335 are Cytoplasmic-facing.

It belongs to the G-protein coupled receptor 1 family. As to quaternary structure, interacts with GNA13. Interacts with CCL21. As to expression, expressed in spleen and, at low levels, in brain. Highly expressed in developing and mature regulatory T-cells.

Its subcellular location is the cell membrane. Functionally, G-protein-coupled receptor of lysophosphatidylserine (LysoPS) that plays different roles in immune response. Plays a negative role in regulatory T-cell accumulation and homeostasis. Under inflammatory conditions where LysoPS production increases, contributes to the down-regulation of regulatory T-cell activity to favor effector response. Mediates the suppression of IL-2 production in activated T-lymphocytes leading to inhibition of growth, proliferation and differentiation of T-cells. Mechanistically, acts via G(s)-containing heterotrimeric G proteins to trigger elevated cyclic AMP levels and protein kinase A/PKA activity, which may in turn act to antagonize proximal TCR signaling. Plays an important role in the initial period of sepsis through the regulation of macrophage polarization and pro- and anti-inflammatory cytokine secretions. Upon testosterone treatment, acts as a receptor for CCL21 and subsequently triggers through G(q)-alpha and G(12)/G(13) proteins a calcium flux leading to chemotactic effects on activated B-cells. Signals via GNA13 and PKA to promote CD86 up-regulation by follicular B-cells. This is Probable G-protein coupled receptor 174 (Gpr174) from Mus musculus (Mouse).